The following is a 466-amino-acid chain: Ribulose bisphosphate carboxylase large chain (466 aa).

Lysine 5 is modified (N6,N6,N6-trimethyllysine). Substrate contacts are provided by asparagine 114 and threonine 164. Catalysis depends on lysine 166, which acts as the Proton acceptor. Lysine 168 contributes to the substrate binding site. Mg(2+) contacts are provided by lysine 192, aspartate 194, and glutamate 195. The residue at position 192 (lysine 192) is an N6-carboxylysine. The active-site Proton acceptor is histidine 285. The substrate site is built by arginine 286, histidine 318, and serine 370.

The protein belongs to the RuBisCO large chain family. Type I subfamily. As to quaternary structure, heterohexadecamer of 8 large chains and 8 small chains. It depends on Mg(2+) as a cofactor.

Its subcellular location is the plastid. It is found in the chloroplast. It carries out the reaction 2 (2R)-3-phosphoglycerate + 2 H(+) = D-ribulose 1,5-bisphosphate + CO2 + H2O. It catalyses the reaction D-ribulose 1,5-bisphosphate + O2 = 2-phosphoglycolate + (2R)-3-phosphoglycerate + 2 H(+). RuBisCO catalyzes two reactions: the carboxylation of D-ribulose 1,5-bisphosphate, the primary event in carbon dioxide fixation, as well as the oxidative fragmentation of the pentose substrate in the photorespiration process. Both reactions occur simultaneously and in competition at the same active site. This chain is Ribulose bisphosphate carboxylase large chain, found in Cornus kousa (Kousa dogwood).